Reading from the N-terminus, the 466-residue chain is Methylenetetrahydrofolate--tRNA-(uracil-5-)-methyltransferase TrmFO (466 aa).

10 to 15 (GGGLAG) provides a ligand contact to FAD.

This sequence belongs to the MnmG family. TrmFO subfamily. FAD is required as a cofactor.

Its subcellular location is the cytoplasm. The enzyme catalyses uridine(54) in tRNA + (6R)-5,10-methylene-5,6,7,8-tetrahydrofolate + NADH + H(+) = 5-methyluridine(54) in tRNA + (6S)-5,6,7,8-tetrahydrofolate + NAD(+). It carries out the reaction uridine(54) in tRNA + (6R)-5,10-methylene-5,6,7,8-tetrahydrofolate + NADPH + H(+) = 5-methyluridine(54) in tRNA + (6S)-5,6,7,8-tetrahydrofolate + NADP(+). In terms of biological role, catalyzes the folate-dependent formation of 5-methyl-uridine at position 54 (M-5-U54) in all tRNAs. The protein is Methylenetetrahydrofolate--tRNA-(uracil-5-)-methyltransferase TrmFO of Phenylobacterium zucineum (strain HLK1).